We begin with the raw amino-acid sequence, 375 residues long: Succinyl-diaminopimelate desuccinylase (375 aa).

H66 serves as a coordination point for Zn(2+). D68 is a catalytic residue. Residue D99 coordinates Zn(2+). The active-site Proton acceptor is E130. Residues E131, E159, and H345 each coordinate Zn(2+).

This sequence belongs to the peptidase M20A family. DapE subfamily. Homodimer. It depends on Zn(2+) as a cofactor. Requires Co(2+) as cofactor.

It catalyses the reaction N-succinyl-(2S,6S)-2,6-diaminopimelate + H2O = (2S,6S)-2,6-diaminopimelate + succinate. It functions in the pathway amino-acid biosynthesis; L-lysine biosynthesis via DAP pathway; LL-2,6-diaminopimelate from (S)-tetrahydrodipicolinate (succinylase route): step 3/3. In terms of biological role, catalyzes the hydrolysis of N-succinyl-L,L-diaminopimelic acid (SDAP), forming succinate and LL-2,6-diaminopimelate (DAP), an intermediate involved in the bacterial biosynthesis of lysine and meso-diaminopimelic acid, an essential component of bacterial cell walls. The chain is Succinyl-diaminopimelate desuccinylase from Xanthobacter autotrophicus (strain ATCC BAA-1158 / Py2).